Reading from the N-terminus, the 65-residue chain is Large ribosomal subunit protein bL35 (65 aa).

Positions 1-30 (MPKMKTVSGAAKRFKKTGSGRFKSKQSHLR) are disordered. Positions 12 to 30 (KRFKKTGSGRFKSKQSHLR) are enriched in basic residues.

The protein belongs to the bacterial ribosomal protein bL35 family.

In Alteromonas mediterranea (strain DSM 17117 / CIP 110805 / LMG 28347 / Deep ecotype), this protein is Large ribosomal subunit protein bL35.